The following is a 609-amino-acid chain: MEMIRIFLIYLILKIIIINGENNEYSKGYGVGIVFPGSKCLNYVGDSIGQPLCNNRLFNGGKKIYSTVTLVDNKNISSQELSKIEILKSFEALTFLQDQCDDLLFTQFGLCDLNFSPCVETIPKITPLQNVSLPQRLCKSVCERMVSNCPRLSLKIDCSISFLFPEIGTEYNLTLYGYTENKGLYKVPCIDPTDGYNNISNQMELIQACPYPLLLKNSSDPKYSPNKGYTYLPPTNCVLTCPMPNYTKTQWKRVYDMAKTLSSISFICACYNILTFGILNRKRKSKYNICITLMSTSIALVYLTDIIKFGYGIEEFLCPEPGRSAVQNDAACGITGAMFHFGITYCCCWAMTMSIVLFCSVKRIKLFYFRHFMIGNTIFTIITTVILLSAKKMVAGTGYIECWVRERWFVITLFWLPCGIGLSIGIFCIGGVIHEIYNISKKVNIRESEFILRQIKPFSLVFSVAGSFLYLFIFFFDVERKIDSYKAAVADYVLCLLSGGSEETCFTTGPNYASFFIFYFFIRVFGVLFFSIYGTSRVARDIWSEVVFDEVRSRLSQSESGISRNNSRTDISFGKNNNSKNSNNSKNSNNSKNSNNSDNDSKSIELEKK.

The first 20 residues, 1 to 20 (MEMIRIFLIYLILKIIIING), serve as a signal peptide directing secretion. Residues 21–259 (ENNEYSKGYG…QWKRVYDMAK (239 aa)) lie on the Extracellular side of the membrane. The region spanning 35–192 (FPGSKCLNYV…GLYKVPCIDP (158 aa)) is the FZ domain. 4 disulfide bridges follow: Cys40–Cys118, Cys53–Cys111, Cys100–Cys149, and Cys138–Cys189. Residues Asn75, Asn130, Asn172, Asn198, Asn217, and Asn245 are each glycosylated (N-linked (GlcNAc...) asparagine). A helical membrane pass occupies residues 260–280 (TLSSISFICACYNILTFGILN). Over 281–288 (RKRKSKYN) the chain is Cytoplasmic. The helical transmembrane segment at 289–309 (ICITLMSTSIALVYLTDIIKF) threads the bilayer. Topologically, residues 310–337 (GYGIEEFLCPEPGRSAVQNDAACGITGA) are extracellular. The chain crosses the membrane as a helical span at residues 338 to 358 (MFHFGITYCCCWAMTMSIVLF). The Cytoplasmic portion of the chain corresponds to 359–365 (CSVKRIK). A helical transmembrane segment spans residues 366-386 (LFYFRHFMIGNTIFTIITTVI). The Extracellular segment spans residues 387–408 (LLSAKKMVAGTGYIECWVRERW). The chain crosses the membrane as a helical span at residues 409–429 (FVITLFWLPCGIGLSIGIFCI). At 430–457 (GGVIHEIYNISKKVNIRESEFILRQIKP) the chain is on the cytoplasmic side. The helical transmembrane segment at 458–478 (FSLVFSVAGSFLYLFIFFFDV) threads the bilayer. Over 479–511 (ERKIDSYKAAVADYVLCLLSGGSEETCFTTGPN) the chain is Extracellular. Residues 512 to 532 (YASFFIFYFFIRVFGVLFFSI) form a helical membrane-spanning segment. Topologically, residues 533-609 (YGTSRVARDI…DSKSIELEKK (77 aa)) are cytoplasmic. Over residues 559 to 570 (ESGISRNNSRTD) the composition is skewed to polar residues. Positions 559–609 (ESGISRNNSRTDISFGKNNNSKNSNNSKNSNNSKNSNNSDNDSKSIELEKK) are disordered. Low complexity predominate over residues 575 to 598 (KNNNSKNSNNSKNSNNSKNSNNSD). Residues 599-609 (NDSKSIELEKK) are compositionally biased toward basic and acidic residues.

Belongs to the G-protein coupled receptor Fz/Smo family.

The protein resides in the membrane. The chain is Frizzled and smoothened-like protein E (fslE) from Dictyostelium discoideum (Social amoeba).